A 262-amino-acid polypeptide reads, in one-letter code: Diaminopimelate epimerase (262 aa).

Substrate contacts are provided by Asn17, Gln45, and Asn63. The active-site Proton donor is Cys72. Substrate-binding positions include 73 to 74 (GN), Asn154, Asn187, and 205 to 206 (ER). The Proton acceptor role is filled by Cys214. 215–216 (GS) provides a ligand contact to substrate.

Belongs to the diaminopimelate epimerase family. Homodimer.

Its subcellular location is the cytoplasm. The catalysed reaction is (2S,6S)-2,6-diaminopimelate = meso-2,6-diaminopimelate. Its pathway is amino-acid biosynthesis; L-lysine biosynthesis via DAP pathway; DL-2,6-diaminopimelate from LL-2,6-diaminopimelate: step 1/1. Functionally, catalyzes the stereoinversion of LL-2,6-diaminopimelate (L,L-DAP) to meso-diaminopimelate (meso-DAP), a precursor of L-lysine and an essential component of the bacterial peptidoglycan. The protein is Diaminopimelate epimerase of Wolbachia sp. subsp. Drosophila simulans (strain wRi).